The chain runs to 1053 residues: DIS3-like exonuclease 1 (1053 aa).

Residues 236 to 310 (AGIKSGRYIQ…KSEWKGRTAA (75 aa)) enclose the CSD1 domain. The tract at residues 306–332 (GRTAALGENDSDDKASGESPSEPMPTG) is disordered. In terms of domain architecture, CSD2 spans 365–431 (ILVTPWDYRI…GEIATILVEN (67 aa)). One can recognise an RNB domain in the interval 465–816 (RKDLRTTHLV…VHRLLMAAIS (352 aa)). Phosphoserine is present on S989.

Belongs to the RNR ribonuclease family. In terms of assembly, component of the RNA exosome complex. The catalytically inactive RNA exosome core (Exo-9) complex is believed to associate with catalytic subunits EXOSC10, and DIS3 or DIS3L in cytoplasmic- and nuclear-specific RNA exosome complex forms. Mg(2+) serves as cofactor.

It localises to the cytoplasm. It catalyses the reaction Exonucleolytic cleavage in the 3'- to 5'-direction to yield nucleoside 5'-phosphates.. Functionally, catalytic component of the RNA exosome complex which has 3'-&gt;5' exoribonuclease activity and participates in a multitude of cellular RNA processing and degradation events. In the cytoplasm, the RNA exosome complex is involved in general mRNA turnover and specifically degrades inherently unstable mRNAs containing AU-rich elements (AREs) within their 3' untranslated regions, and in RNA surveillance pathways, preventing translation of aberrant mRNAs. It seems to be involved in degradation of histone mRNA. The sequence is that of DIS3-like exonuclease 1 (Dis3l) from Mus musculus (Mouse).